Reading from the N-terminus, the 412-residue chain is Acetate kinase (412 aa).

A Mg(2+)-binding site is contributed by Asn10. An ATP-binding site is contributed by Lys17. The tract at residues 40–61 (ETSRLAHTPSAGGGAEPRERTG) is disordered. Arg95 provides a ligand contact to substrate. Asp152 functions as the Proton donor/acceptor in the catalytic mechanism. Residues 212 to 216 (HLGNG), 286 to 288 (DMR), and 334 to 338 (GVGEN) contribute to the ATP site. Glu388 provides a ligand contact to Mg(2+).

This sequence belongs to the acetokinase family. Homodimer. Mg(2+) serves as cofactor. It depends on Mn(2+) as a cofactor.

It is found in the cytoplasm. It carries out the reaction acetate + ATP = acetyl phosphate + ADP. It functions in the pathway metabolic intermediate biosynthesis; acetyl-CoA biosynthesis; acetyl-CoA from acetate: step 1/2. Catalyzes the formation of acetyl phosphate from acetate and ATP. Can also catalyze the reverse reaction. The polypeptide is Acetate kinase (Streptomyces griseus subsp. griseus (strain JCM 4626 / CBS 651.72 / NBRC 13350 / KCC S-0626 / ISP 5235)).